Consider the following 212-residue polypeptide: Dephospho-CoA kinase (212 aa).

Positions 3–207 (IIGLTGGIAS…RHLADDPEPG (205 aa)) constitute a DPCK domain. 11–16 (ASGKST) is an ATP binding site.

This sequence belongs to the CoaE family.

The protein localises to the cytoplasm. It carries out the reaction 3'-dephospho-CoA + ATP = ADP + CoA + H(+). Its pathway is cofactor biosynthesis; coenzyme A biosynthesis; CoA from (R)-pantothenate: step 5/5. In terms of biological role, catalyzes the phosphorylation of the 3'-hydroxyl group of dephosphocoenzyme A to form coenzyme A. The chain is Dephospho-CoA kinase from Moorella thermoacetica (strain ATCC 39073 / JCM 9320).